We begin with the raw amino-acid sequence, 363 residues long: MRVVLKLGTSVLTAGTDRLHRPRLVDLMRDIAAVSAQGHEVVLVSSGAVTAGWEALGFPPRERTLAEKQLLAAVGQVQLMHLYTSLAELYGLRSAQLLLTADDFRERTRYLNARTTLEGCLSRGVLPVINENDTVAVEQIKVGDNDTLSAFVANLVEADLLLILTDAPGLYTADPRTHPDATLIPVVERVTPDIWALAGGAGSHRGTGGMHTKIQAAEIATRAGTPVVIAPGDLPEALRRVVDGEALGTRFLAHGTRLEARKRWILAEIAHGRLLLDGGAAQAVRERGSSLLPAGIRQVEGDFERGHTVRLLAPDGQELGRGLTRYRADDLRRVCGHHSREIEALLGYTYGEEAVHRDDLVLL.

Residue Lys-6 coordinates ATP. Positions 46, 133, and 145 each coordinate substrate. ATP is bound by residues 165–166 (TD) and 207–213 (TGGMHTK). In terms of domain architecture, PUA spans 271–349 (HGRLLLDGGA…REIEALLGYT (79 aa)).

Belongs to the glutamate 5-kinase family.

It localises to the cytoplasm. It carries out the reaction L-glutamate + ATP = L-glutamyl 5-phosphate + ADP. The protein operates within amino-acid biosynthesis; L-proline biosynthesis; L-glutamate 5-semialdehyde from L-glutamate: step 1/2. Functionally, catalyzes the transfer of a phosphate group to glutamate to form L-glutamate 5-phosphate. The protein is Glutamate 5-kinase of Deinococcus radiodurans (strain ATCC 13939 / DSM 20539 / JCM 16871 / CCUG 27074 / LMG 4051 / NBRC 15346 / NCIMB 9279 / VKM B-1422 / R1).